The sequence spans 1982 residues: Ras guanine nucleotide exchange factor V (1982 aa).

LRR repeat units lie at residues 1–26 (MGNINSICLNNNGKYRIDSISCSLEG), 47–68 (LTQLLIIRECKLKQIPVNITNL), 69–94 (SNLSELILSDNKLSQLPWSLPPPFKP), 105–128 (NENLVRLDLSNNRFTEFPSSVFVL), 130–151 (NLKQLILCNNQLTNMNVTLCGG), 164–187 (ACQLEELKLSNNNFTIFPSIIGDQ), 188–210 (LTTLKSLDLSGNTITSLPNSFSN), 212–234 (VSLTSLNLKSNKFTCFPPSLCTL), 236–257 (KLVHLNLSCNQILVSPSDHTLG), 261–284 (LPSLEKLELQHNRFAHFPMDILEI), 286–307 (SLRVLKLQDNDIDKIPDKIGNL), 308–330 (LNLNELFLSENKITQLPSTIGEL), 331–352 (INLRKLYLEYNKIGSLPQEFSK), 354–376 (SKLNILILHNNDLKFVPDQLHSL), and 378–399 (QLLRLSLDENQLSSSDQKLIKS). Over 1 to 1831 (MGNINSICLN…IANAFYELRN (1831 aa)) the chain is Extracellular. Disordered stretches follow at residues 414-436 (YGSTMNGTGTTSSSGSASTSTHG), 457-532 (NQIN…NKKQ), and 615-654 (NNSGGGDSMNGSGGNINNSGGSGSGCGTISGSTTKQRRGS). Composition is skewed to low complexity over residues 415–436 (GSTMNGTGTTSSSGSASTSTHG) and 457–495 (NQINNNNNNNNNNNNNNNNNNNSSNNNSGTNSLSSTPNG). An LRR 16 repeat occupies 443–466 (DILLSSVTLNNSILNQINNNNNNN). A compositionally biased stretch (polar residues) spans 506-520 (LTISRSLFRGNSSNL). Positions 515-567 (GNSSNLESEKEDFINKKQQQQQQQQQQQQQQQQQQQQQQQQQQQQQQQQQQLG) form a coiled coil. One copy of the LRR 17 repeat lies at 592-615 (EDDIQKMQLGLEALSNLETSIGSN). Positions 616–642 (NSGGGDSMNGSGGNINNSGGSGSGCGT) are enriched in gly residues. LRR repeat units lie at residues 657–684 (LPPTNAFKLSPNVVSSSYNTLPASVMSG) and 773–796 (HSNLSQSLSINNLAHRLPTSLSSS). 2 disordered regions span residues 756–778 (QSSTNSFLPPQHQHHHHHSNLSQ) and 807–829 (LQFQQQQQHHHHNHNNHQNSNQP). Positions 832–1236 (TIVPSFSKFK…QIKYSIDRYG (405 aa)) constitute a GBD/FH3 domain. LRR repeat units follow at residues 979 to 1003 (LLGILQFNLDNAQLQFDEEKVGYCL), 1075 to 1100 (SPYVPLVALLRNPIIEMPTKTTVFKI), 1239 to 1263 (VPAIGSLVLDGSILQSSGSQSRWVD), and 1689 to 1712 (VQNMPAQSIEDDGLKELTELFVDL). In terms of domain architecture, N-terminal Ras-GEF spans 1595 to 1717 (KDRRVSSVTL…LFVDLSTKSY (123 aa)). A Ras-GEF domain is found at 1747–1974 (DEIEIARQLS…YEMSLSAEPR (228 aa)). Residues 1832 to 1848 (YHLLMAIISGLNASPVL) form a helical membrane-spanning segment. Topologically, residues 1849-1982 (RLKYTKGKLS…PRNAERYDIQ (134 aa)) are cytoplasmic. LRR repeat units follow at residues 1865 to 1888 (LDTLEELMSTQSSMKNYRADLAAA) and 1917 to 1941 (RINFKKLEMYKKTIATLQNFSLFPY).

It is found in the membrane. Functionally, promotes the exchange of Ras-bound GDP by GTP. The chain is Ras guanine nucleotide exchange factor V (gefV) from Dictyostelium discoideum (Social amoeba).